The primary structure comprises 149 residues: Calmodulin (149 aa).

A2 is modified (N-acetylalanine). EF-hand domains follow at residues E8 to N43, P44 to D79, D81 to K116, and L117 to K149. Ca(2+) contacts are provided by D21, D23, D25, T27, E32, D57, D59, N61, T63, E68, D94, D96, N98, Y100, E105, D130, D132, D134, Q136, and E141.

This sequence belongs to the calmodulin family. Trimethylation of Lys-116 observed in other calmodulins is absent here.

Calmodulin mediates the control of a large number of enzymes, ion channels and other proteins by Ca(2+). Among the enzymes to be stimulated by the calmodulin-Ca(2+) complex are a number of protein kinases and phosphatases. This Pleurotus cornucopiae (Cornucopia mushroom) protein is Calmodulin (CMD1).